A 427-amino-acid chain; its full sequence is uncharacterized protein (427 aa).

It belongs to the MG032/MG096/MG288 family.

This is an uncharacterized protein from Mycoplasma pneumoniae (strain ATCC 29342 / M129 / Subtype 1) (Mycoplasmoides pneumoniae).